Consider the following 472-residue polypeptide: Kynureninase 2 (472 aa).

Residues Leu133, Thr134, 162 to 165 (FPSD), Asp247, His250, and Tyr272 each bind pyridoxal 5'-phosphate. Position 273 is an N6-(pyridoxal phosphate)lysine (Lys273). Residues Trp314 and Asn342 each coordinate pyridoxal 5'-phosphate.

It belongs to the kynureninase family. In terms of assembly, homodimer. The cofactor is pyridoxal 5'-phosphate.

The protein resides in the cytoplasm. The enzyme catalyses L-kynurenine + H2O = anthranilate + L-alanine + H(+). It catalyses the reaction 3-hydroxy-L-kynurenine + H2O = 3-hydroxyanthranilate + L-alanine + H(+). It participates in amino-acid degradation; L-kynurenine degradation; L-alanine and anthranilate from L-kynurenine: step 1/1. It functions in the pathway cofactor biosynthesis; NAD(+) biosynthesis; quinolinate from L-kynurenine: step 2/3. Functionally, catalyzes the cleavage of L-kynurenine (L-Kyn) and L-3-hydroxykynurenine (L-3OHKyn) into anthranilic acid (AA) and 3-hydroxyanthranilic acid (3-OHAA), respectively. The chain is Kynureninase 2 (kyn-2) from Neurospora crassa (strain ATCC 24698 / 74-OR23-1A / CBS 708.71 / DSM 1257 / FGSC 987).